The primary structure comprises 344 residues: Glyceraldehyde-3-phosphate dehydrogenase (344 aa).

Residues 11–12 and G110 each bind NAD(+); that span reads TI. Residue 139 to 141 coordinates D-glyceraldehyde 3-phosphate; it reads SCN. The active-site Nucleophile is the C140. NAD(+) is bound at residue R169. D-glyceraldehyde 3-phosphate is bound at residue 195 to 196; the sequence is HG. Q302 is an NAD(+) binding site.

The protein belongs to the glyceraldehyde-3-phosphate dehydrogenase family. In terms of assembly, homotetramer.

Its subcellular location is the cytoplasm. The enzyme catalyses D-glyceraldehyde 3-phosphate + phosphate + NADP(+) = (2R)-3-phospho-glyceroyl phosphate + NADPH + H(+). It catalyses the reaction D-glyceraldehyde 3-phosphate + phosphate + NAD(+) = (2R)-3-phospho-glyceroyl phosphate + NADH + H(+). Its pathway is carbohydrate degradation; glycolysis; pyruvate from D-glyceraldehyde 3-phosphate: step 1/5. This chain is Glyceraldehyde-3-phosphate dehydrogenase, found in Pyrobaculum neutrophilum (strain DSM 2338 / JCM 9278 / NBRC 100436 / V24Sta) (Thermoproteus neutrophilus).